A 335-amino-acid chain; its full sequence is Ethanol acetyltransferase 1 (335 aa).

The 253-residue stretch at 48 to 300 (PIVFVHGIFG…NSAHDILDQR (253 aa)) folds into the AB hydrolase-1 domain. Catalysis depends on charge relay system residues Ser-121, Asp-145, and His-294.

It belongs to the AB hydrolase superfamily.

It is found in the mitochondrion. The catalysed reaction is ethanol + acetyl-CoA = ethyl acetate + CoA. The enzyme catalyses acetyl-CoA + H2O = acetate + CoA + H(+). It carries out the reaction ethyl acetate + H2O = ethanol + acetate + H(+). Its function is as follows. Alcohol acetyltransferase that catalyzes the synthesis of ethyl acetate from ethanol and acetyl-CoA. Can also function as a thioesterase by hydrolyzing acetyl-CoA in the absence of ethanol, as well as esterase hydrolyzing ethyl acetate. The protein is Ethanol acetyltransferase 1 (EAT1) of Cyberlindnera fabianii (Yeast).